The primary structure comprises 192 residues: MNTIWIAVGALALLGLVFGAILGYASRRFAVEDDPVVEKIDAILPQSQCGQCGYPGCRPYAEAVGLQGEKINRCAPGGEAVMLKIAELLNVEPQPCDGEEQQAAPVRMLAVIDENNCIGCTKCIQACPVDAIVGATRAMHTVMSDLCTGCNLCVDPCPTHCIELRPVNETPDSWKWDLNTIPVRIIPVEQHA.

The hydrophobic stretch occupies residues 1 to 26 (MNTIWIAVGALALLGLVFGAILGYAS). The region spanning 32–91 (EDDPVVEKIDAILPQSQCGQCGYPGCRPYAEAVGLQGEKINRCAPGGEAVMLKIAELLNV) is the 4Fe-4S domain. [4Fe-4S] cluster contacts are provided by C49, C52, C57, C74, C117, C120, C123, C127, C147, C150, C153, and C157. 2 4Fe-4S ferredoxin-type domains span residues 108-137 (MLAV…GATR) and 138-167 (AMHT…LRPV).

This sequence belongs to the 4Fe4S bacterial-type ferredoxin family. RnfB subfamily. In terms of assembly, the complex is composed of six subunits: RsxA, RsxB, RsxC, RsxD, RsxE and RsxG. It depends on [4Fe-4S] cluster as a cofactor.

Its subcellular location is the cell inner membrane. Functionally, part of a membrane-bound complex that couples electron transfer with translocation of ions across the membrane. Required to maintain the reduced state of SoxR. The protein is Ion-translocating oxidoreductase complex subunit B of Salmonella newport (strain SL254).